The chain runs to 179 residues: UPF0227 protein PM0825 (179 aa).

It belongs to the UPF0227 family.

This is UPF0227 protein PM0825 from Pasteurella multocida (strain Pm70).